Reading from the N-terminus, the 330-residue chain is Malate dehydrogenase (330 aa).

11-17 (GGAGQIA) contacts NAD(+). Arginine 92 and arginine 98 together coordinate substrate. Residues asparagine 105, glutamine 112, and 129 to 131 (VGN) contribute to the NAD(+) site. 2 residues coordinate substrate: asparagine 131 and arginine 162. Histidine 187 serves as the catalytic Proton acceptor.

Belongs to the LDH/MDH superfamily. MDH type 2 family.

The catalysed reaction is (S)-malate + NAD(+) = oxaloacetate + NADH + H(+). In terms of biological role, catalyzes the reversible oxidation of malate to oxaloacetate. In Protochlamydia amoebophila (strain UWE25), this protein is Malate dehydrogenase.